Reading from the N-terminus, the 57-residue chain is Thiocillin GE37468 (57 aa).

A propeptide spans 1–42 (MGNNEEYFIDVNDLSIDVFDVVEQGGAVTALTADHGMPEVGA) (removed in mature form). The segment at residues 43-44 (ST) is a cross-link (5-methyloxazole-4-carboxylic acid (Ser-Thr)). The segment at residues 43-52 (STNCFCYICC) is a cross-link (pyridine-2,5-dicarboxylic acid (Ser-Cys) (with S-53)). The pyridine-2,5-dicarboxylic acid (Ser-Ser) (with C-52) cross-link spans 43–53 (STNCFCYICCS). The thiazole-4-carboxylic acid (Asn-Cys) cross-link spans 45–46 (NC). Residues 47-48 (FC) constitute a cross-link (thiazoline-4-carboxylic acid (Phe-Cys)). Ile-50 carries the post-translational modification 5-hydroxy-3-methylproline (Ile). Residues 50–51 (IC) constitute a cross-link (thiazole-4-carboxylic acid (Ile-Cys)). Positions 51 to 52 (CC) form a cross-link, thiazole-4-carboxylic acid (Cys-Cys). The thiazole-4-carboxylic acid (Ser-Cys) cross-link spans 53–54 (SC). 2,3-didehydroalanine (Ser) is present on residues Ser-55 and Ser-56. Position 57 (Asn-57) is a propeptide, removed in mature form.

Maturation of thiazole and oxazole containing antibiotics involves the enzymatic condensation of a Cys, Ser or Thr with the alpha-carbonyl of the preceding amino acid to form a thioether or ether bond, then dehydration to form a double bond with the alpha-amino nitrogen. Thiazoline or oxazoline ring are dehydrogenated to form thiazole or oxazole rings. Post-translationally, maturation of pyridinyl containing antibiotics involves the cross-linking of a Ser and a Cys-Ser pair usually separated by 7 or 8 residues along the peptide chain. The Ser residues are dehydrated to didehydroalanines, then bonded between their beta carbons. The alpha carbonyl of the Cys condenses with alpha carbon of the first Ser to form a pyridinyl ring. The ring may be multiply dehydrogenated to form a pyridine ring with loss of the amino nitrogen of the first Ser.

It is found in the secreted. Has bacteriocidal activity against both aerobic and anaerobic Gram-positive bacteria. Inhibits growth of B.subtilis (MIC=0.047 ug/ml) and methicillin-resistant S.aureus (MRSA) (MIC=0.047 ug/ml). Has poor activity against Gram-negative bacteria, with the exception of B.fragilis. Inhibits bacterial protein biosynthesis by acting on elongation factor Tu (EF-Tu). Full antibiotic activity depends on the presence of the modified residue Ile-50. This Streptomyces sp protein is Thiocillin GE37468 (getA).